The primary structure comprises 216 residues: MIVIGEKFPEVEVKTTHGVIKLPDHFTKQGKWFMLFSHPADFTPVCTTEFYGLQIRLEKFRELGVEPIGLSVDQVFSHLKWMEWIKEKLGVEIEFPVIADDRGDLAEKLGMIPSGSTITARAVFIVDDKGIIRAIVYYPAEVGRDWDEILRLVKALKISTEKGVALPHKWPNNELIGDKVIVPPASSVEQIKEREEAKAKGEIECYDWWFCYKKLE.

One can recognise a Thioredoxin domain in the interval 2-158 (IVIGEKFPEV…ILRLVKALKI (157 aa)). The active-site Cysteine sulfenic acid (-SOH) intermediate is the Cys46. Arg121 contributes to the substrate binding site. Cys205 and Cys211 are oxidised to a cystine.

Belongs to the peroxiredoxin family. Prx6 subfamily. Homodecamer. Pentamer of dimers that assemble into a ring structure.

It is found in the cytoplasm. The catalysed reaction is a hydroperoxide + [thioredoxin]-dithiol = an alcohol + [thioredoxin]-disulfide + H2O. In terms of biological role, thiol-specific peroxidase that catalyzes the reduction of hydrogen peroxide and organic hydroperoxides to water and alcohols, respectively. Plays a role in cell protection against oxidative stress by detoxifying peroxides. The sequence is that of Peroxiredoxin from Pyrococcus furiosus (strain ATCC 43587 / DSM 3638 / JCM 8422 / Vc1).